The following is a 271-amino-acid chain: Ubiquitin thioesterase OTUB1 (271 aa).

Ala2 is modified (N-acetylalanine). Ser16 is subject to Phosphoserine. Tyr26 bears the Phosphotyrosine; by SRC mark. In terms of domain architecture, OTU spans 80 to 271 (SYIRKTRPDG…RPGHYDILYK (192 aa)). The active site involves Asp88. Cys91 serves as the catalytic Nucleophile. 2 ubiquitin-conjugating enzyme E2 binding regions span residues 130 to 138 (FTEFTIEDF) and 169 to 177 (DYLVVYLRL). Positions 189–195 (FFEHFIE) are free ubiquitin binding. The tract at residues 206–213 (QEVEPMCK) is ubiquitin-conjugating enzyme E2 binding. 2 free ubiquitin binding regions span residues 214 to 221 (ESDHIHII) and 245 to 251 (NPHIFPE). Residue His265 is part of the active site.

Belongs to the peptidase C65 family. As to quaternary structure, interacts with FUS and RACK1. Interacts with UBE2D1/UBCH5A, UBE2W/UBC16 and UBE2N/UBC13. In terms of assembly, interacts with RNF128. Forms a ternary complex with RNF128 and USP8. Interacts with the C-terminal UCH catalytic domain of USP8. Interacts with RNF128. Does not associate with USP8. Phosphorylation at Tyr-26 by SRC and SRMS promotes deubiquitination of RPTOR via a non-catalytic process. As to expression, isoform 1 is ubiquitous. Isoform 2 is expressed only in lymphoid tissues such as tonsils, lymph nodes and spleen, as well as peripheral blood mononuclear cells.

It localises to the cytoplasm. It carries out the reaction Thiol-dependent hydrolysis of ester, thioester, amide, peptide and isopeptide bonds formed by the C-terminal Gly of ubiquitin (a 76-residue protein attached to proteins as an intracellular targeting signal).. By free ubiquitin: binding of free ubiquitin triggers conformational changes in the OTU domain and formation of a ubiquitin-binding helix in the N-terminus, promoting binding of the conjugated donor ubiquitin in UBE2N/UBC13 to OTUB1. Hydrolase that can specifically remove 'Lys-48'-linked conjugated ubiquitin from proteins and plays an important regulatory role at the level of protein turnover by preventing degradation. Regulator of T-cell anergy, a phenomenon that occurs when T-cells are rendered unresponsive to antigen rechallenge and no longer respond to their cognate antigen. Acts via its interaction with RNF128/GRAIL, a crucial inductor of CD4 T-cell anergy. Isoform 1 destabilizes RNF128, leading to prevent anergy. In contrast, isoform 2 stabilizes RNF128 and promotes anergy. Surprisingly, it regulates RNF128-mediated ubiquitination, but does not deubiquitinate polyubiquitinated RNF128. Deubiquitinates estrogen receptor alpha (ESR1). Mediates deubiquitination of 'Lys-48'-linked polyubiquitin chains, but not 'Lys-63'-linked polyubiquitin chains. Not able to cleave di-ubiquitin. Also capable of removing NEDD8 from NEDD8 conjugates, but with a much lower preference compared to 'Lys-48'-linked ubiquitin. In terms of biological role, plays a key non-catalytic role in DNA repair regulation by inhibiting activity of RNF168, an E3 ubiquitin-protein ligase that promotes accumulation of 'Lys-63'-linked histone H2A and H2AX at DNA damage sites. Inhibits RNF168 independently of ubiquitin thioesterase activity by binding and inhibiting UBE2N/UBC13, the E2 partner of RNF168, thereby limiting spreading of 'Lys-63'-linked histone H2A and H2AX marks. Inhibition occurs by binding to free ubiquitin: free ubiquitin acts as an allosteric regulator that increases affinity for UBE2N/UBC13 and disrupts interaction with UBE2V1. The OTUB1-UBE2N/UBC13-free ubiquitin complex adopts a configuration that mimics a cleaved 'Lys48'-linked di-ubiquitin chain. Acts as a regulator of mTORC1 and mTORC2 complexes. When phosphorylated at Tyr-26, acts as an activator of the mTORC1 complex by mediating deubiquitination of RPTOR via a non-catalytic process: acts by binding and inhibiting the activity of the ubiquitin-conjugating enzyme E2 (UBE2D1/UBCH5A, UBE2W/UBC16 and UBE2N/UBC13), thereby preventing ubiquitination of RPTOR. Can also act as an inhibitor of the mTORC1 and mTORC2 complexes in response to amino acids by mediating non-catalytic deubiquitination of DEPTOR. The sequence is that of Ubiquitin thioesterase OTUB1 (OTUB1) from Homo sapiens (Human).